Reading from the N-terminus, the 457-residue chain is MIVPDTEGLLIYSYGLMYGSYCMACQMLIPHFQCIPGIFPNFRISTELIKTMTDKLEQPNNNVPQQPWGPFPPAFGGRPSGEQTDGNPGEFDNDAAHQQTAPFMTHFFPRIGLQFPDFTEYQRFNGFQRNAFFPNPFGSQFTGQAFAQSFPLHNSMTTMDGFNLTHAPHPFSTNTNSTKPKDIENTVQSTIKHSSENIQDKPPVLSVEYPVKYDSELKFDANVDFTAVPKQESSDDSTLKNLKKSDQQLQQPQQFTFPPPLLAEKSFEQPRMREDVLPFHPQFYPAPLDMGTNFKQEMRTPPIDGHIDYRKFDASGKRMEFQPPGALHDCQVCLSTHANGLHFGARTCAACAAFFRRTISDDKRYVCKRNQRCNNASRDGTGYRKICRSCRMKRCLEIGMLPENVQHKRNRRDSGSPPRKTPFDTFFNGFYPSFQPSGSAAQPITVSSSESPRHTTN.

Disordered stretches follow at residues 57–95 (EQPNNNVPQQPWGPFPPAFGGRPSGEQTDGNPGEFDNDA) and 230–252 (KQESSDDSTLKNLKKSDQQLQQP). Residues 327–407 (LHDCQVCLST…IGMLPENVQH (81 aa)) constitute a DNA-binding region (nuclear receptor). NR C4-type zinc fingers lie at residues 330–351 (CQVCLSTHANGLHFGARTCAAC) and 367–395 (CKRNQRCNNASRDGTGYRKICRSCRMKRC). Residues 435–457 (QPSGSAAQPITVSSSESPRHTTN) are disordered.

The protein belongs to the nuclear hormone receptor family. NR0 subfamily. In terms of assembly, heterodimer with a partner that confers DNA binding capacity or a nuclear hormone receptor whose DNA binding it inhibits. Expressed predominantly in the AWA neurons.

It is found in the nucleus. The protein resides in the cytoplasm. Its subcellular location is the perinuclear region. Its function is as follows. Required for the function of one pair of chemosensory neurons called AWA neurons that are involved in chemotaxis to volatile odorants. Acts in a pathway that specifies olfactory neuronal fate. Regulates the transcription of olfactory signaling molecules such as odr-10 that specify AWA neuron identity and function. Represses the expression in AWA neurons of factors such as str-2 which specify AWC neuron identity. This is Nuclear hormone receptor family member odr-7 (odr-7) from Caenorhabditis elegans.